We begin with the raw amino-acid sequence, 142 residues long: uncharacterized protein (142 aa).

Residues 1–120 (MADKFDANDE…TILKWEKNMD (120 aa)) form the N-acetyltransferase domain.

This sequence belongs to the acetyltransferase family.

This is an uncharacterized protein from Streptococcus pyogenes serotype M3 (strain ATCC BAA-595 / MGAS315).